A 350-amino-acid chain; its full sequence is Guanine nucleotide-binding protein G(t) subunit alpha (350 aa).

The tract at residues 1–21 (MGAGASAEEKHSRELEKKLKE) is disordered. Glycine 2 is lipidated: N-myristoyl glycine. Residues 7–21 (AEEKHSRELEKKLKE) are compositionally biased toward basic and acidic residues. The G-alpha domain occupies 28–350 (RTVKLLLLGA…KENLKDCGLF (323 aa)). The tract at residues 31–44 (KLLLLGAGESGKST) is G1 motif. GTP-binding positions include 36–43 (GAGESGKS), 171–177 (LRSRVKT), 196–200 (DVGGQ), 265–268 (NKKD), and alanine 322. Mg(2+)-binding residues include serine 43 and threonine 177. The tract at residues 169–177 (DVLRSRVKT) is G2 motif. A G3 motif region spans residues 192 to 201 (FRMFDVGGQR). The interval 261–268 (VLFLNKKD) is G4 motif. The G5 motif stretch occupies residues 320-325 (TCATDT).

The protein belongs to the G-alpha family. G(i/o/t/z) subfamily. In terms of assembly, g proteins are composed of 3 units; alpha, beta and gamma. The alpha chain contains the guanine nucleotide binding site.

Functionally, guanine nucleotide-binding proteins (G proteins) are involved as modulators or transducers in various transmembrane signaling systems. Transducin is an amplifier and one of the transducers of a visual impulse that performs the coupling between rhodopsin and cGMP-phosphodiesterase. The polypeptide is Guanine nucleotide-binding protein G(t) subunit alpha (gnat) (Xenopus laevis (African clawed frog)).